The primary structure comprises 352 residues: Carbohydrate sulfotransferase 11 (352 aa).

Residues 1–16 lie on the Cytoplasmic side of the membrane; it reads MKQTILDLMRMSRICR. A helical; Signal-anchor for type II membrane protein membrane pass occupies residues 17–37; sequence MVLATCLGSFILVIFYFQSMF. Residues 38–352 lie on the Lumenal side of the membrane; sequence QPVMRRNPFA…YSIPSYLKLQ (315 aa). 3'-phosphoadenylyl sulfate-binding positions include 124–130 and 186–194; these read PKVACTN and REPFERLVS. 4 N-linked (GlcNAc...) asparagine glycosylation sites follow: asparagine 205, asparagine 223, asparagine 321, and asparagine 342.

This sequence belongs to the sulfotransferase 2 family.

The protein resides in the golgi apparatus membrane. The catalysed reaction is chondroitin beta-D-glucuronate + n 3'-phosphoadenylyl sulfate = chondroitin 4'-sulfate + n adenosine 3',5'-bisphosphate + n H(+). Functionally, catalyzes the transfer of sulfate to position 4 of the N-acetylgalactosamine (GalNAc) residue of chondroitin. This chain is Carbohydrate sulfotransferase 11 (chst11), found in Danio rerio (Zebrafish).